The following is a 150-amino-acid chain: MRIVLQKVSEASVTVGSAVVSQIKHGYMLLVGIGTDDKLEDIDKLSKKILTFRGFDDDAGYGWKRNISEVDGEILCVSQFTLMARTSKGTKPDFHLAQRGELANELYGQFMDKLKAGLGDDKVQNGVFGAMMSCKLTNEGPVTIIFDSKA.

Residues 140–141 (GP) carry the Gly-cisPro motif, important for rejection of L-amino acids motif.

Belongs to the DTD family. Homodimer.

Its subcellular location is the cytoplasm. It catalyses the reaction glycyl-tRNA(Ala) + H2O = tRNA(Ala) + glycine + H(+). The catalysed reaction is a D-aminoacyl-tRNA + H2O = a tRNA + a D-alpha-amino acid + H(+). Its function is as follows. An aminoacyl-tRNA editing enzyme that deacylates mischarged D-aminoacyl-tRNAs. Also deacylates mischarged glycyl-tRNA(Ala), protecting cells against glycine mischarging by AlaRS. Acts via tRNA-based rather than protein-based catalysis; rejects L-amino acids rather than detecting D-amino acids in the active site. By recycling D-aminoacyl-tRNA to D-amino acids and free tRNA molecules, this enzyme counteracts the toxicity associated with the formation of D-aminoacyl-tRNA entities in vivo and helps enforce protein L-homochirality. This chain is D-aminoacyl-tRNA deacylase (DTD1), found in Kluyveromyces lactis (strain ATCC 8585 / CBS 2359 / DSM 70799 / NBRC 1267 / NRRL Y-1140 / WM37) (Yeast).